Here is a 125-residue protein sequence, read N- to C-terminus: Small ribosomal subunit protein eS8 (125 aa).

It belongs to the eukaryotic ribosomal protein eS8 family. As to quaternary structure, part of the 30S ribosomal subunit.

The chain is Small ribosomal subunit protein eS8 from Methanosarcina acetivorans (strain ATCC 35395 / DSM 2834 / JCM 12185 / C2A).